A 170-amino-acid polypeptide reads, in one-letter code: Peptide deformylase (170 aa).

Positions 91 and 133 each coordinate Fe cation. Residue Glu-134 is part of the active site. His-137 contributes to the Fe cation binding site.

The protein belongs to the polypeptide deformylase family. Fe(2+) is required as a cofactor.

It catalyses the reaction N-terminal N-formyl-L-methionyl-[peptide] + H2O = N-terminal L-methionyl-[peptide] + formate. Removes the formyl group from the N-terminal Met of newly synthesized proteins. Requires at least a dipeptide for an efficient rate of reaction. N-terminal L-methionine is a prerequisite for activity but the enzyme has broad specificity at other positions. The sequence is that of Peptide deformylase from Aliivibrio fischeri (strain ATCC 700601 / ES114) (Vibrio fischeri).